A 160-amino-acid polypeptide reads, in one-letter code: Phosphopantetheine adenylyltransferase (160 aa).

A substrate-binding site is contributed by S9. ATP contacts are provided by residues 9–10 and H17; that span reads SF. Substrate contacts are provided by K41, L73, and K87. Residues 88-90, E98, and 123-129 each bind ATP; these read GLR and YGYLSSS.

It belongs to the bacterial CoaD family. In terms of assembly, homohexamer. Mg(2+) is required as a cofactor.

It is found in the cytoplasm. It carries out the reaction (R)-4'-phosphopantetheine + ATP + H(+) = 3'-dephospho-CoA + diphosphate. Its pathway is cofactor biosynthesis; coenzyme A biosynthesis; CoA from (R)-pantothenate: step 4/5. Reversibly transfers an adenylyl group from ATP to 4'-phosphopantetheine, yielding dephospho-CoA (dPCoA) and pyrophosphate. This is Phosphopantetheine adenylyltransferase from Caldanaerobacter subterraneus subsp. tengcongensis (strain DSM 15242 / JCM 11007 / NBRC 100824 / MB4) (Thermoanaerobacter tengcongensis).